The chain runs to 250 residues: Ribosomal RNA small subunit methyltransferase J (250 aa).

S-adenosyl-L-methionine contacts are provided by residues 96–97 (RD) and Asp168.

Belongs to the methyltransferase superfamily. RsmJ family.

The protein localises to the cytoplasm. It catalyses the reaction guanosine(1516) in 16S rRNA + S-adenosyl-L-methionine = N(2)-methylguanosine(1516) in 16S rRNA + S-adenosyl-L-homocysteine + H(+). Its function is as follows. Specifically methylates the guanosine in position 1516 of 16S rRNA. In Neisseria meningitidis serogroup C (strain 053442), this protein is Ribosomal RNA small subunit methyltransferase J.